The following is a 736-amino-acid chain: DNA topoisomerase 4 subunit A (736 aa).

In terms of domain architecture, Topo IIA-type catalytic spans 32-496 (LPDVRDGLKP…SFEQVTLTNQ (465 aa)). Residue Tyr120 is the O-(5'-phospho-DNA)-tyrosine intermediate of the active site.

It belongs to the type II topoisomerase GyrA/ParC subunit family. ParC type 1 subfamily. Heterotetramer composed of ParC and ParE.

It localises to the cell membrane. The catalysed reaction is ATP-dependent breakage, passage and rejoining of double-stranded DNA.. Functionally, topoisomerase IV is essential for chromosome segregation. It relaxes supercoiled DNA. Performs the decatenation events required during the replication of a circular DNA molecule. In Rickettsia bellii (strain RML369-C), this protein is DNA topoisomerase 4 subunit A.